A 327-amino-acid polypeptide reads, in one-letter code: DNA-directed RNA polymerase subunit alpha (327 aa).

The interval 1–227 (MLIAHRPTLI…ELFGLARELN (227 aa)) is alpha N-terminal domain (alpha-NTD). The segment at 244–327 (SDEDLRIPIE…GSYFDPNYGS (84 aa)) is alpha C-terminal domain (alpha-CTD).

This sequence belongs to the RNA polymerase alpha chain family. Homodimer. The RNAP catalytic core consists of 2 alpha, 1 beta, 1 beta' and 1 omega subunit. When a sigma factor is associated with the core the holoenzyme is formed, which can initiate transcription.

The enzyme catalyses RNA(n) + a ribonucleoside 5'-triphosphate = RNA(n+1) + diphosphate. DNA-dependent RNA polymerase catalyzes the transcription of DNA into RNA using the four ribonucleoside triphosphates as substrates. This chain is DNA-directed RNA polymerase subunit alpha, found in Tropheryma whipplei (strain TW08/27) (Whipple's bacillus).